The primary structure comprises 138 residues: Large ribosomal subunit protein uL16 (138 aa).

It belongs to the universal ribosomal protein uL16 family. As to quaternary structure, part of the 50S ribosomal subunit.

Binds 23S rRNA and is also seen to make contacts with the A and possibly P site tRNAs. This Anaeromyxobacter dehalogenans (strain 2CP-C) protein is Large ribosomal subunit protein uL16.